The chain runs to 571 residues: Cerebral cavernous malformations 2 protein-like (571 aa).

Disordered regions lie at residues 164–193, 212–295, and 544–571; these read AGVD…GTAE, AEAR…PQDP, and LAPD…DNYL. Residues 184–193 show a composition bias toward basic and acidic residues; it reads PEKRRVGTAE. Over residues 212 to 223 the composition is skewed to gly residues; that stretch reads AEARAGGGGGGS. Residues 237–251 are compositionally biased toward basic and acidic residues; the sequence is WERRQTFSGSWERRH. Gly residues predominate over residues 253 to 264; that stretch reads GGGGGGGAGKPG. Over residues 286 to 295 the composition is skewed to pro residues; the sequence is GPNPLDPQDP. A compositionally biased stretch (acidic residues) spans 545–555; that stretch reads APDDDDDDEDE.

It belongs to the CCM2 family.

The chain is Cerebral cavernous malformations 2 protein-like (CCM2L) from Homo sapiens (Human).